The following is a 598-amino-acid chain: Probable translation initiation factor IF-2 (598 aa).

Positions 3-225 constitute a tr-type G domain; that stretch reads LRCPIVSVLG…GLAQKFLEQK (223 aa). The interval 12 to 19 is G1; the sequence is GHVDHGKT. GTP is bound at residue 12-19; that stretch reads GHVDHGKT. Residues 37–41 form a G2 region; that stretch reads GITQH. The interval 76–79 is G3; the sequence is DTPG. GTP contacts are provided by residues 76–80 and 130–133; these read DTPGH and NKVD. The G4 stretch occupies residues 130–133; it reads NKVD. A G5 region spans residues 200 to 202; the sequence is SAM.

It belongs to the TRAFAC class translation factor GTPase superfamily. Classic translation factor GTPase family. IF-2 subfamily.

Its function is as follows. Function in general translation initiation by promoting the binding of the formylmethionine-tRNA to ribosomes. Seems to function along with eIF-2. This is Probable translation initiation factor IF-2 from Methanococcus maripaludis (strain C5 / ATCC BAA-1333).